The chain runs to 2136 residues: U5 small nuclear ribonucleoprotein 200 kDa helicase (2136 aa).

2 positions are modified to phosphoserine: serine 17 and serine 26. The segment at 39–81 (EVLSLVGKLEGTRMGDKAQRTKPQMQEERRAKRRKRDEDRHDM) is disordered. Lysine 46 participates in a covalent cross-link: Glycyl lysine isopeptide (Lys-Gly) (interchain with G-Cter in SUMO2). Residues 48–81 (EGTRMGDKAQRTKPQMQEERRAKRRKRDEDRHDM) are compositionally biased toward basic and acidic residues. Residues 54 to 84 (DKAQRTKPQMQEERRAKRRKRDEDRHDMNKM) adopt a coiled-coil conformation. Serine 225 carries the phosphoserine modification. Threonine 389 is subject to Phosphothreonine. The interval 395–2129 (DLDQGGEALA…YKFSVDVKEA (1735 aa)) is interaction with C9orf78 and WBP4. Residues 490–673 (RAALETDENL…FLRVDPAKGL (184 aa)) enclose the Helicase ATP-binding 1 domain. 503–510 (APTGAGKT) serves as a coordination point for ATP. The DEAH box motif lies at 615–618 (DEIH). One can recognise a Helicase C-terminal 1 domain in the interval 684-921 (PLEQTYVGIT…NAKDAVNWLG (238 aa)). Tyrosine 709 carries the phosphotyrosine modification. A Glycyl lysine isopeptide (Lys-Gly) (interchain with G-Cter in SUMO) cross-link involves residue lysine 944. Position 971 is an N6-acetyllysine; alternate (lysine 971). Lysine 971 participates in a covalent cross-link: Glycyl lysine isopeptide (Lys-Gly) (interchain with G-Cter in SUMO); alternate. An SEC63 1 domain is found at 982 to 1286 (TELGRIASHY…SCETQLPVSF (305 aa)). Glycyl lysine isopeptide (Lys-Gly) (interchain with G-Cter in SUMO) cross-links involve residues lysine 1071 and lysine 1199. The tract at residues 1282–2136 (LPVSFRHLIL…KEAETDSDSD (855 aa)) is interaction with TSSC4. Residues 1337–1512 (NTVYNSDDNV…WLGCSATSTF (176 aa)) form the Helicase ATP-binding 2 domain. 1350 to 1357 (APTGSGKT) serves as a coordination point for ATP. Threonine 1428 is subject to Phosphothreonine. Residues 1454–1457 (DEVH) carry the DEAH box motif. Positions 1545-1753 (PVYHAITKHS…TIENKQDAVD (209 aa)) constitute a Helicase C-terminal 2 domain. Residue threonine 1765 is modified to Phosphothreonine. Positions 1812-2124 (PLNLGMIAAY…GCDQEYKFSV (313 aa)) constitute an SEC63 2 domain. Serine 2002 bears the Phosphoserine mark. Residue lysine 2091 forms a Glycyl lysine isopeptide (Lys-Gly) (interchain with G-Cter in SUMO) linkage. Threonine 2131 bears the Phosphothreonine mark. 2 positions are modified to phosphoserine: serine 2133 and serine 2135.

This sequence belongs to the helicase family. SKI2 subfamily. As to quaternary structure, component of a core complex containing at least PRPF8, SNRNP200, EFTUD2 and SNRNP40. Component of the U5 snRNP and U4/U6-U5 tri-snRNP complexes, building blocks of the spliceosome. Component of the U4/U6-U5 tri-snRNP complex composed of the U4, U6 and U5 snRNAs and at least PRPF3, PRPF4, PRPF6, PRPF8, PRPF31, SNRNP200, TXNL4A, SNRNP40, DDX23, CD2BP2, PPIH, SNU13, EFTUD2, SART1 and USP39. Component of precatalytic, catalytic and postcatalytic spliceosomal complexes. Component of the minor spliceosome, which splices U12-type introns. Interacts with C9orf78; the interaction is direct and mutually exclusive with its interaction with WBP4. Interacts with WBP4; the interaction is mutually exclusive with its interaction with C9orf78. Interacts with PRPF8. Interacts with TSSC4; the interaction is direct, excludes recruitment of C9ORF78 and WBP4 to SNRNP200 and negatively regulates its RNA helicase activity.

The protein localises to the nucleus. It carries out the reaction ATP + H2O = ADP + phosphate + H(+). Catalyzes the ATP-dependent unwinding of U4/U6 RNA duplices, an essential step in the assembly of a catalytically active spliceosome. Plays a role in pre-mRNA splicing as core component of precatalytic, catalytic and postcatalytic spliceosomal complexes. As a component of the minor spliceosome, involved in the splicing of U12-type introns in pre-mRNAs. Involved in spliceosome assembly, activation and disassembly. Mediates changes in the dynamic network of RNA-RNA interactions in the spliceosome. The polypeptide is U5 small nuclear ribonucleoprotein 200 kDa helicase (Snrnp200) (Mus musculus (Mouse)).